Here is a 152-residue protein sequence, read N- to C-terminus: ESAT-6 secretion machinery protein EssA (152 aa).

Residues 1-114 lie on the Cytoplasmic side of the membrane; sequence MLMNSVIALT…PYIQNKQEKK (114 aa). The chain crosses the membrane as a helical span at residues 115 to 135; the sequence is IFPYILMSVGAFLTLGFVIFS. Residues 136–152 are Extracellular-facing; it reads IHKGRRTKNESARKSNI.

It belongs to the EssA family.

It is found in the cell membrane. Component of the ESAT-6 secretion system (Ess). Required for the secretion of EsxA. In Staphylococcus aureus (strain MRSA252), this protein is ESAT-6 secretion machinery protein EssA.